The primary structure comprises 113 residues: Protein translation factor SUI1 homolog 2 (113 aa).

The residue at position 2 (Ser2) is an N-acetylserine.

This sequence belongs to the SUI1 family.

Probably involved in translation. In Arabidopsis thaliana (Mouse-ear cress), this protein is Protein translation factor SUI1 homolog 2.